A 691-amino-acid polypeptide reads, in one-letter code: Elongation factor G (691 aa).

Positions 8 to 283 constitute a tr-type G domain; the sequence is EDYRNFGIMA…AVVDYLPSPA (276 aa). Residues 17-24, 81-85, and 135-138 contribute to the GTP site; these read AHIDAGKT, DTPGH, and NKMD.

This sequence belongs to the TRAFAC class translation factor GTPase superfamily. Classic translation factor GTPase family. EF-G/EF-2 subfamily.

Its subcellular location is the cytoplasm. Its function is as follows. Catalyzes the GTP-dependent ribosomal translocation step during translation elongation. During this step, the ribosome changes from the pre-translocational (PRE) to the post-translocational (POST) state as the newly formed A-site-bound peptidyl-tRNA and P-site-bound deacylated tRNA move to the P and E sites, respectively. Catalyzes the coordinated movement of the two tRNA molecules, the mRNA and conformational changes in the ribosome. The protein is Elongation factor G of Methylobacterium sp. (strain 4-46).